A 341-amino-acid polypeptide reads, in one-letter code: MHISIVGITGYTGLELLRLALNHPHVTVSSIHATKEVGVQISDIFPHLKGIFDKEIQVFDSEFIMTHSDLVFFATPSGVAKDLSKNFVKNNFPVIDLSGDHRLSPDVYLKWYKKSPCTVDIQKRFTYGLSEVMNISHRNRFIANPGCYATATELALYPIISNHLIRVDSIIVDAKSGLTGAGKKLNQSSHYVNVNNNYVTYKLNKHQHIPEIVQTLQFFNKSLQNIQFSTSLIPVNRGIVATIYTRLENGVKINQIESTYKDVYKNKPFIRIKDGLPQLNEVIGTNYTDIGFVYNETTGVLTISSVIDNLIKGAAGQAIQNMNLMFNFDETDGLILAPLYI.

Cys147 is a catalytic residue.

Belongs to the NAGSA dehydrogenase family. Type 1 subfamily.

The protein resides in the cytoplasm. It carries out the reaction N-acetyl-L-glutamate 5-semialdehyde + phosphate + NADP(+) = N-acetyl-L-glutamyl 5-phosphate + NADPH + H(+). Its pathway is amino-acid biosynthesis; L-arginine biosynthesis; N(2)-acetyl-L-ornithine from L-glutamate: step 3/4. Its function is as follows. Catalyzes the NADPH-dependent reduction of N-acetyl-5-glutamyl phosphate to yield N-acetyl-L-glutamate 5-semialdehyde. The polypeptide is N-acetyl-gamma-glutamyl-phosphate reductase (Staphylococcus epidermidis (strain ATCC 35984 / DSM 28319 / BCRC 17069 / CCUG 31568 / BM 3577 / RP62A)).